A 606-amino-acid polypeptide reads, in one-letter code: Maternal effect protein oskar (606 aa).

An HTH OST-type domain is found at 152–221 (EYPDIDSEVR…SGKRIFNLKA (70 aa)). Residues serine 270 and serine 275 each carry the phosphoserine modification. The interval 425-439 (LMGDDFMLYLARMEL) is leucine-zipper.

Interacts with smaug (smg). In terms of assembly, interacts with yl/yolkless. As to expression, begins to accumulate at the posterior pole of the oocyte from stage 8 onwards.

Its subcellular location is the endosome. Organizes the germ plasm and directs localization of the posterior determinant nanos. Oskar protein is required to keep nanos (nos) RNA and staufen protein at the posterior pole. The polypeptide is Maternal effect protein oskar (osk) (Drosophila melanogaster (Fruit fly)).